Here is a 416-residue protein sequence, read N- to C-terminus: MSTQTVTIKSLGAQGDGIAHCPDGPVYVPFALPGETVAIAKVKDQGTVMSITEASADRRDPVCRHFGPEGINGTCGGCSLQHLADQPYHAFKRELVVSALRSKGLTPPVDDLVICRPGERRRAVFAARKTEKGLLLGFSQANSHHIVAIEECPVTSPGIVSRFDAIRAIGLSMVANAEPFRITVLETLSGLDISVEGIKSVNDKQRRTLTETVLAMRGIARVSLSGEILIEPQKPIIEFGGIPVSPPAGGFTQATKQAEDAMAELMLAHVGKSKRIADLFCGSGTFALRLARIGRVHAVEAEDKALKALDFAARNTQGLKPVSVEKRDLFRRPLMTSELKNYDAVVFDPPRAGAEVQCKELARSTVKKIVAVSCNPLTLARDLAILTEGGYRVTRVTPVDQFLWSPHVEAVAVLEK.

4 residues coordinate [4Fe-4S] cluster: cysteine 63, cysteine 75, cysteine 78, and cysteine 152. S-adenosyl-L-methionine-binding residues include glutamine 253, phenylalanine 280, glutamate 300, and aspartate 348. Cysteine 374 functions as the Nucleophile in the catalytic mechanism.

It belongs to the class I-like SAM-binding methyltransferase superfamily. RNA M5U methyltransferase family.

This is an uncharacterized protein from Agrobacterium fabrum (strain C58 / ATCC 33970) (Agrobacterium tumefaciens (strain C58)).